The chain runs to 608 residues: Elongation factor 4 (608 aa).

The tr-type G domain maps to 11–193; sequence SKIRNFSIIA…QIVEKVPAPD (183 aa). GTP contacts are provided by residues 23–28 and 140–143; these read DHGKST and NKID.

It belongs to the TRAFAC class translation factor GTPase superfamily. Classic translation factor GTPase family. LepA subfamily.

It is found in the cell membrane. It carries out the reaction GTP + H2O = GDP + phosphate + H(+). Required for accurate and efficient protein synthesis under certain stress conditions. May act as a fidelity factor of the translation reaction, by catalyzing a one-codon backward translocation of tRNAs on improperly translocated ribosomes. Back-translocation proceeds from a post-translocation (POST) complex to a pre-translocation (PRE) complex, thus giving elongation factor G a second chance to translocate the tRNAs correctly. Binds to ribosomes in a GTP-dependent manner. This Bacillus cytotoxicus (strain DSM 22905 / CIP 110041 / 391-98 / NVH 391-98) protein is Elongation factor 4.